Here is a 210-residue protein sequence, read N- to C-terminus: Calaxin (210 aa).

EF-hand domains lie at 64 to 99, 100 to 135, and 145 to 180; these read TDDMMTDRVCRVIDKDNDGYLSVKEWVEALSVFLRG, TLDEKMKYCFEVYDLNGDGYISREEMFQMLKDSLIR, and GIKDIVEIALKKMDYDHDGRVSYADFEKTVMDENLL. Positions 77, 79, 81, 83, 88, 113, 115, 117, 119, 124, 158, 160, 162, 164, and 169 each coordinate Ca(2+).

As to quaternary structure, component of the outer dynein arm-docking complex along with ODAD1, ODAD2, ODAD3 and ODAD4.

It is found in the cytoplasm. Its subcellular location is the cytoskeleton. The protein localises to the cilium axoneme. The protein resides in the cell projection. It localises to the cilium. It is found in the flagellum. Functionally, component of the outer dynein arm-docking complex (ODA-DC) that mediates outer dynein arms (ODA) binding onto the doublet microtubule. Seems to regulate the assembly of both ODAs and their axonemal docking complex onto ciliary microtubules. Regulates ciliary and flagellar motility and is required for cilia-driven determination of body laterality. In terms of biological role, regulates ciliary motility and is required for cilia-driven determination of body laterality. The protein is Calaxin (clxn) of Danio rerio (Zebrafish).